Here is a 953-residue protein sequence, read N- to C-terminus: Homeobox protein LUMINIDEPENDENS (953 aa).

Residues 63–123 (KIGKRPRDLL…VTQKTRVRKQ (61 aa)) constitute a DNA-binding region (homeobox). The interval 404–430 (EQPGQKAAGKSPQTVRIGTSGRSRPMS) is disordered. Residues 414–425 (SPQTVRIGTSGR) show a composition bias toward polar residues. 5 repeat units span residues 498–502 (QPVNG), 507–511 (QPVNG), 516–520 (QPVNG), 525–529 (QPVNG), and 534–538 (QPVNG). Positions 498 to 538 (QPVNGFSTIQPVNGPSAVQPVNGPLAVQPVNGPSALQPVNG) are 5 X 5 AA repeats of Q-P-V-N-G. Disordered stretches follow at residues 606–668 (NSKE…EPQD), 733–763 (APNS…NPGM), and 861–953 (VGQM…KRWR). Positions 608–623 (KEADVQRNRNRRERET) are enriched in basic and acidic residues. The span at 651 to 661 (PEIPSQQPPEE) shows a compositional bias: low complexity. Polar residues predominate over residues 733 to 742 (APNSSSSSNK). Residues 869 to 884 (SSSWRSQQSQNSYYSH) are compositionally biased toward low complexity. Composition is skewed to polar residues over residues 888–934 (EIAS…QQQA) and 942–953 (THPYWNQNKRWR).

As to quaternary structure, interacts with SUF4. In terms of tissue distribution, expressed in shoot apex, root apex, leaf primordia and floral buds.

The protein localises to the nucleus. Functionally, seems to play a role in the regulation of flowering time in the autonomous flowering pathway by repressing FLOWERING LOCUS C expression. The chain is Homeobox protein LUMINIDEPENDENS (LD) from Arabidopsis thaliana (Mouse-ear cress).